The primary structure comprises 906 residues: Protein translocase subunit SecA (906 aa).

ATP is bound by residues Gln-89, 107-111 (GEGKT), and Asp-502. Residues Cys-890, Cys-892, Cys-901, and His-902 each contribute to the Zn(2+) site.

The protein belongs to the SecA family. Monomer and homodimer. Part of the essential Sec protein translocation apparatus which comprises SecA, SecYEG and auxiliary proteins SecDF-YajC and YidC. Zn(2+) is required as a cofactor.

The protein resides in the cell inner membrane. The protein localises to the cytoplasm. The catalysed reaction is ATP + H2O + cellular proteinSide 1 = ADP + phosphate + cellular proteinSide 2.. Part of the Sec protein translocase complex. Interacts with the SecYEG preprotein conducting channel. Has a central role in coupling the hydrolysis of ATP to the transfer of proteins into and across the cell membrane, serving both as a receptor for the preprotein-SecB complex and as an ATP-driven molecular motor driving the stepwise translocation of polypeptide chains across the membrane. The chain is Protein translocase subunit SecA from Bartonella quintana (strain Toulouse) (Rochalimaea quintana).